Consider the following 191-residue polypeptide: Phosphopantetheine adenylyltransferase (191 aa).

A substrate-binding site is contributed by Ser-8. Residues 8 to 9 (SF) and His-16 contribute to the ATP site. The substrate site is built by Lys-40, Thr-72, and Arg-86. Residues 87 to 89 (GLR), Glu-97, and 122 to 128 (YSFLSSS) contribute to the ATP site.

This sequence belongs to the bacterial CoaD family. Homohexamer. Mg(2+) serves as cofactor.

It localises to the cytoplasm. The enzyme catalyses (R)-4'-phosphopantetheine + ATP + H(+) = 3'-dephospho-CoA + diphosphate. It participates in cofactor biosynthesis; coenzyme A biosynthesis; CoA from (R)-pantothenate: step 4/5. In terms of biological role, reversibly transfers an adenylyl group from ATP to 4'-phosphopantetheine, yielding dephospho-CoA (dPCoA) and pyrophosphate. The polypeptide is Phosphopantetheine adenylyltransferase (Nostoc sp. (strain PCC 7120 / SAG 25.82 / UTEX 2576)).